Reading from the N-terminus, the 160-residue chain is MNFEIEQILTQIIAFLIMLGVLKKFVWKRLLNLIEERKQLIQSEFDKIENQKEEVTKLSEEYKAKLHDIDAEARRRIQEAVVKGRDIAHDIEQETRQKVTSLLNNAQEEMKLELAQAKEQLKKDVINISFAITEKLIHEKVDISKHQKLVEEAVEQVEIR.

The helical transmembrane segment at 5–27 threads the bilayer; it reads IEQILTQIIAFLIMLGVLKKFVW.

This sequence belongs to the ATPase B chain family. In terms of assembly, F-type ATPases have 2 components, F(1) - the catalytic core - and F(0) - the membrane proton channel. F(1) has five subunits: alpha(3), beta(3), gamma(1), delta(1), epsilon(1). F(0) has three main subunits: a(1), b(2) and c(10-14). The alpha and beta chains form an alternating ring which encloses part of the gamma chain. F(1) is attached to F(0) by a central stalk formed by the gamma and epsilon chains, while a peripheral stalk is formed by the delta and b chains.

The protein localises to the cell inner membrane. In terms of biological role, f(1)F(0) ATP synthase produces ATP from ADP in the presence of a proton or sodium gradient. F-type ATPases consist of two structural domains, F(1) containing the extramembraneous catalytic core and F(0) containing the membrane proton channel, linked together by a central stalk and a peripheral stalk. During catalysis, ATP synthesis in the catalytic domain of F(1) is coupled via a rotary mechanism of the central stalk subunits to proton translocation. Component of the F(0) channel, it forms part of the peripheral stalk, linking F(1) to F(0). The protein is ATP synthase subunit b of Protochlamydia amoebophila (strain UWE25).